The following is a 190-amino-acid chain: Pyridoxal 5'-phosphate synthase subunit PdxT (190 aa).

46–48 (GES) is an L-glutamine binding site. The Nucleophile role is filled by Cys78. Residues Arg105 and 138-139 (IR) each bind L-glutamine. Catalysis depends on charge relay system residues His174 and Glu176.

This sequence belongs to the glutaminase PdxT/SNO family. As to quaternary structure, in the presence of PdxS, forms a dodecamer of heterodimers. Only shows activity in the heterodimer.

It catalyses the reaction aldehydo-D-ribose 5-phosphate + D-glyceraldehyde 3-phosphate + L-glutamine = pyridoxal 5'-phosphate + L-glutamate + phosphate + 3 H2O + H(+). It carries out the reaction L-glutamine + H2O = L-glutamate + NH4(+). It participates in cofactor biosynthesis; pyridoxal 5'-phosphate biosynthesis. Catalyzes the hydrolysis of glutamine to glutamate and ammonia as part of the biosynthesis of pyridoxal 5'-phosphate. The resulting ammonia molecule is channeled to the active site of PdxS. The protein is Pyridoxal 5'-phosphate synthase subunit PdxT of Bifidobacterium longum (strain NCC 2705).